A 132-amino-acid polypeptide reads, in one-letter code: Small ribosomal subunit protein uS8c (132 aa).

It belongs to the universal ribosomal protein uS8 family. As to quaternary structure, part of the 30S ribosomal subunit.

It is found in the plastid. It localises to the chloroplast. Its function is as follows. One of the primary rRNA binding proteins, it binds directly to 16S rRNA central domain where it helps coordinate assembly of the platform of the 30S subunit. The protein is Small ribosomal subunit protein uS8c (rps8) of Marchantia polymorpha (Common liverwort).